The primary structure comprises 547 residues: Inactive delta-guaiene synthase (547 aa).

Residues D299, D303, and D444 each coordinate Mg(2+). The DDXXD motif signature appears at 299 to 303 (DDTYD).

The protein belongs to the terpene synthase family. Mg(2+) serves as cofactor.

This is Inactive delta-guaiene synthase (C1) from Aquilaria crassna (Eagle wood).